The chain runs to 410 residues: Cysteine desulfurase IscS (410 aa).

Pyridoxal 5'-phosphate contacts are provided by residues 79 to 80 (AT), asparagine 159, glutamine 187, and 207 to 209 (SGH). The residue at position 210 (lysine 210) is an N6-(pyridoxal phosphate)lysine. Threonine 248 is a pyridoxal 5'-phosphate binding site. The Cysteine persulfide intermediate role is filled by cysteine 334. Cysteine 334 lines the [2Fe-2S] cluster pocket.

It belongs to the class-V pyridoxal-phosphate-dependent aminotransferase family. NifS/IscS subfamily. In terms of assembly, homodimer. Forms a heterotetramer with IscU, interacts with other sulfur acceptors. Requires pyridoxal 5'-phosphate as cofactor.

The protein resides in the cytoplasm. It catalyses the reaction (sulfur carrier)-H + L-cysteine = (sulfur carrier)-SH + L-alanine. It functions in the pathway cofactor biosynthesis; iron-sulfur cluster biosynthesis. In terms of biological role, master enzyme that delivers sulfur to a number of partners involved in Fe-S cluster assembly, tRNA modification or cofactor biosynthesis. Catalyzes the removal of elemental sulfur atoms from cysteine to produce alanine. Functions as a sulfur delivery protein for Fe-S cluster synthesis onto IscU, an Fe-S scaffold assembly protein, as well as other S acceptor proteins. The chain is Cysteine desulfurase IscS from Ehrlichia chaffeensis (strain ATCC CRL-10679 / Arkansas).